A 653-amino-acid chain; its full sequence is Translation factor GUF1, mitochondrial (653 aa).

The 181-residue stretch at 56-236 (ENYRNFSIVA…SIIKNIPAPN (181 aa)) folds into the tr-type G domain. GTP is bound by residues 65–72 (AHVDHGKS), 129–133 (DTPGH), and 183–186 (NKID).

This sequence belongs to the TRAFAC class translation factor GTPase superfamily. Classic translation factor GTPase family. LepA subfamily.

The protein localises to the mitochondrion inner membrane. It catalyses the reaction GTP + H2O = GDP + phosphate + H(+). Its function is as follows. Promotes mitochondrial protein synthesis. May act as a fidelity factor of the translation reaction, by catalyzing a one-codon backward translocation of tRNAs on improperly translocated ribosomes. Binds to mitochondrial ribosomes in a GTP-dependent manner. This chain is Translation factor GUF1, mitochondrial, found in Candida tropicalis (strain ATCC MYA-3404 / T1) (Yeast).